We begin with the raw amino-acid sequence, 388 residues long: Succinate--CoA ligase [ADP-forming] subunit beta (388 aa).

Residues 9–245 form the ATP-grasp domain; the sequence is KELLAGYGLP…KSQENERELK (237 aa). ATP is bound by residues Lys46, 53-55, Glu100, Tyr103, and Glu108; that span reads GRG. Asn200 and Asp214 together coordinate Mg(2+). Substrate is bound by residues Asn265 and 322-324; that span reads GIV.

The protein belongs to the succinate/malate CoA ligase beta subunit family. As to quaternary structure, heterotetramer of two alpha and two beta subunits. Mg(2+) serves as cofactor.

It carries out the reaction succinate + ATP + CoA = succinyl-CoA + ADP + phosphate. The enzyme catalyses GTP + succinate + CoA = succinyl-CoA + GDP + phosphate. It functions in the pathway carbohydrate metabolism; tricarboxylic acid cycle; succinate from succinyl-CoA (ligase route): step 1/1. In terms of biological role, succinyl-CoA synthetase functions in the citric acid cycle (TCA), coupling the hydrolysis of succinyl-CoA to the synthesis of either ATP or GTP and thus represents the only step of substrate-level phosphorylation in the TCA. The beta subunit provides nucleotide specificity of the enzyme and binds the substrate succinate, while the binding sites for coenzyme A and phosphate are found in the alpha subunit. In Neisseria meningitidis serogroup C / serotype 2a (strain ATCC 700532 / DSM 15464 / FAM18), this protein is Succinate--CoA ligase [ADP-forming] subunit beta.